The chain runs to 589 residues: MRTHFCGLINETLIGHTVTLAGWTDVARNLGGVCFIDLRDHEGIVQITVDSRAIDQNNSELFKVASGLSYEDVLQVEGVVCARHAVNDKIKTGKVEVIATKIKILNKAAPLPFHAHENPGEDIRLKYRYLDLRRPEMQRMQRTRIKLVQALRRHLDMHGFQDIETPILTKATPEGARDFLVPARMHPGEFYALPQSPQLFKQILMVAGFDRYYQIARCFRDEALRADRQLEFTQLDMEFAFVSERDVQDFVEEMIRRVFKEVAGIELDTTFPRMTWKEAMRRFGSDKPDLRINLELIDVAALVADSTFTPFTDAVAHPNGRVAALRIPSGTVLSRKQIDEYAAYTAKYGATGLAYAKLAPTGEITSPIAKFFSEDAFASLLSHIGAEKGDIVFFGAGNYNKVSDFMSALRLKAGKDFALITADWRPLWVTDFPMFEWDEEAQRYVALHHPFTAPAAIDDIDELRAHARTALSRGYDMVLNGNEIGGGSIRIHRPEMQRAVFELLGITEDEARAKFGFLLDALNYGAPPHGGIAFGIDRIAALIAGTESIRDVIPFPKTTGAQCLMTDAPSPISEEQLSEIHVITKKTTP.

E174 contacts L-aspartate. Residues 198 to 201 are aspartate; sequence QLFK. R220 is an L-aspartate binding site. Residues 220 to 222 and Q229 each bind ATP; that span reads RDE. H448 is a binding site for L-aspartate. Residue E483 coordinates ATP. R490 serves as a coordination point for L-aspartate. ATP is bound at residue 535–538; sequence GIDR.

The protein belongs to the class-II aminoacyl-tRNA synthetase family. Type 1 subfamily. As to quaternary structure, homodimer.

The protein localises to the cytoplasm. The enzyme catalyses tRNA(Asp) + L-aspartate + ATP = L-aspartyl-tRNA(Asp) + AMP + diphosphate. In terms of biological role, catalyzes the attachment of L-aspartate to tRNA(Asp) in a two-step reaction: L-aspartate is first activated by ATP to form Asp-AMP and then transferred to the acceptor end of tRNA(Asp). The chain is Aspartate--tRNA ligase from Xylella fastidiosa (strain M12).